Reading from the N-terminus, the 317-residue chain is 17-beta-hydroxysteroid dehydrogenase type 6 (317 aa).

An N-terminal signal peptide occupies residues 1–17 (MWLYLAVLLGLYYLLRW). Residue 33–57 (FITGCDSGFGNQLARQLDLRGLRVL) participates in NAD(+) binding. 2 N-linked (GlcNAc...) asparagine glycosylation sites follow: asparagine 71 and asparagine 161. Serine 164 contacts substrate. The active-site Proton acceptor is tyrosine 176.

Belongs to the short-chain dehydrogenases/reductases (SDR) family.

The protein resides in the microsome membrane. The protein localises to the endoplasmic reticulum membrane. The catalysed reaction is all-trans-retinol--[retinol-binding protein] + NAD(+) = all-trans-retinal--[retinol-binding protein] + NADH + H(+). It carries out the reaction all-trans-retinol + NAD(+) = all-trans-retinal + NADH + H(+). It catalyses the reaction androsterone + NAD(+) = 5alpha-androstan-3,17-dione + NADH + H(+). The enzyme catalyses testosterone + NAD(+) = androst-4-ene-3,17-dione + NADH + H(+). The catalysed reaction is 5alpha-androstane-3alpha,17beta-diol + NAD(+) = 17beta-hydroxy-5alpha-androstan-3-one + NADH + H(+). It carries out the reaction 17beta-estradiol + NAD(+) = estrone + NADH + H(+). It catalyses the reaction 17beta-estradiol + NADP(+) = estrone + NADPH + H(+). The enzyme catalyses 3alpha-hydroxy-5alpha-pregnan-20-one + NAD(+) = 5alpha-pregnane-3,20-dione + NADH + H(+). The catalysed reaction is 5alpha-androstane-3beta,17beta-diol + NAD(+) = 17beta-hydroxy-5alpha-androstan-3-one + NADH + H(+). It carries out the reaction 3beta-hydroxy-5alpha-androstan-17-one + NAD(+) = 5alpha-androstan-3,17-dione + NADH + H(+). NAD-dependent oxidoreductase with broad substrate specificity that shows both oxidative and reductive activity (in vitro). Has 17-beta-hydroxysteroid dehydrogenase activity towards various steroids (in vitro). Converts 5-alpha-androstan-3-alpha,17-beta-diol to androsterone and estradiol to estrone (in vitro). Has 3-alpha-hydroxysteroid dehydrogenase activity towards androsterone (in vitro). Has retinol dehydrogenase activity towards all-trans-retinol (in vitro). Can convert androsterone to epi-androsterone. Androsterone is first oxidized to 5-alpha-androstane-3,17-dione and then reduced to epi-andosterone. Can act on both C-19 and C-21 3-alpha-hydroxysteroids. The sequence is that of 17-beta-hydroxysteroid dehydrogenase type 6 (HSD17B6) from Bos taurus (Bovine).